A 395-amino-acid chain; its full sequence is Probable L-tyrosine/L-aspartate decarboxylase (395 aa).

Lys242 carries the N6-(pyridoxal phosphate)lysine modification.

This sequence belongs to the group II decarboxylase family. MfnA subfamily. Pyridoxal 5'-phosphate is required as a cofactor.

The enzyme catalyses L-tyrosine + H(+) = tyramine + CO2. It carries out the reaction L-aspartate + H(+) = beta-alanine + CO2. Its pathway is cofactor biosynthesis; methanofuran biosynthesis. It functions in the pathway cofactor biosynthesis; coenzyme A biosynthesis. Functionally, catalyzes the decarboxylation of L-tyrosine to produce tyramine for methanofuran biosynthesis. Can also catalyze the decarboxylation of L-aspartate to produce beta-alanine for coenzyme A (CoA) biosynthesis. This is Probable L-tyrosine/L-aspartate decarboxylase from Methanosarcina acetivorans (strain ATCC 35395 / DSM 2834 / JCM 12185 / C2A).